Reading from the N-terminus, the 211-residue chain is Uridine kinase (211 aa).

Residue 12–19 (GGSGSGKT) coordinates ATP.

It belongs to the uridine kinase family.

It is found in the cytoplasm. It catalyses the reaction uridine + ATP = UMP + ADP + H(+). It carries out the reaction cytidine + ATP = CMP + ADP + H(+). Its pathway is pyrimidine metabolism; CTP biosynthesis via salvage pathway; CTP from cytidine: step 1/3. The protein operates within pyrimidine metabolism; UMP biosynthesis via salvage pathway; UMP from uridine: step 1/1. In Geobacillus kaustophilus (strain HTA426), this protein is Uridine kinase.